A 93-amino-acid polypeptide reads, in one-letter code: U12-lycotoxin-Ls1a (93 aa).

The signal sequence occupies residues 1–18 (MKFAVILLFSLVVLAVAS). The propeptide occupies 19 to 38 (ESVEEVRREIDIEDLPEQQR).

Belongs to the neurotoxin 31 family. Post-translationally, contains 5 disulfide bonds. As to expression, expressed by the venom gland.

The protein localises to the secreted. In Lycosa singoriensis (Wolf spider), this protein is U12-lycotoxin-Ls1a.